We begin with the raw amino-acid sequence, 517 residues long: MQLNPAEISELIKSRIEGLAASSDIRNQGTVVSVADGIVRIHGLSDVMQGEMLEFPATADGTPTYGLALNLERDSVGSVILGEYEHIAEGDTVKCTGRILEVPIGPELLGRVVNALGQPIDGKGPINAKLSDVIEKVAPGVIARKSVDQPLQTGLKSIDSMVPIGRGQRELIIGDRQTGKTAVAIDAIINQKGKGVSCVYVAIGQKASSIKNVVRSLEQAGAMDYTIVVAASASESAAMQYVSAYSGCTMGEYFRDRGEDALIVYDDLSKQAVAYRQVSLLLRRPPGREAYPGDVFYLHSRLLERAARVNEKYVEDFTKGAVKGKTGSLTALPIIETQAGDVSAFVPTNVISITDGQIFLETSLFNAGIRPAINAGISVSRVGGAAQTKLIKNLSGGIRTDLAQYRELAAFAQFASDLDEATRKQLDRGARVTELLKQSQYSPLSVSTMGATLFAVNKGFMDDVDVKKVLAFESGLHAWLKDKHAPLMAKLEANKAMDKDAEAELTTAVTAFKKSFA.

Residue 174 to 181 (GDRQTGKT) participates in ATP binding.

The protein belongs to the ATPase alpha/beta chains family. F-type ATPases have 2 components, CF(1) - the catalytic core - and CF(0) - the membrane proton channel. CF(1) has five subunits: alpha(3), beta(3), gamma(1), delta(1), epsilon(1). CF(0) has three main subunits: a(1), b(2) and c(9-12). The alpha and beta chains form an alternating ring which encloses part of the gamma chain. CF(1) is attached to CF(0) by a central stalk formed by the gamma and epsilon chains, while a peripheral stalk is formed by the delta and b chains.

It localises to the cell inner membrane. The catalysed reaction is ATP + H2O + 4 H(+)(in) = ADP + phosphate + 5 H(+)(out). In terms of biological role, produces ATP from ADP in the presence of a proton gradient across the membrane. The alpha chain is a regulatory subunit. This is ATP synthase subunit alpha 1 from Polaromonas naphthalenivorans (strain CJ2).